Reading from the N-terminus, the 347-residue chain is uncharacterized protein (347 aa).

Mn(2+) is bound by residues aspartate 207, aspartate 218, histidine 279, glutamate 312, and glutamate 326.

Belongs to the peptidase M24B family. Requires Mn(2+) as cofactor.

This is an uncharacterized protein from Methanocaldococcus jannaschii (strain ATCC 43067 / DSM 2661 / JAL-1 / JCM 10045 / NBRC 100440) (Methanococcus jannaschii).